A 601-amino-acid polypeptide reads, in one-letter code: Lanthanide-dependent methanol dehydrogenase (601 aa).

Residues 1 to 21 (MRAVHLLALGAGLAAASPALA) form the signal peptide. A disulfide bridge links cysteine 124 with cysteine 125. Arginine 130, threonine 174, serine 189, glycine 190, and glycine 191 together coordinate pyrroloquinoline quinone. Glutamate 192 serves as a coordination point for La(3+). Cysteine 197 and cysteine 256 are disulfide-bonded. Tryptophan 258 serves as a coordination point for pyrroloquinoline quinone. The La(3+) site is built by asparagine 276, aspartate 318, and aspartate 320. Aspartate 318 (proton acceptor) is an active-site residue. Arginine 345 lines the pyrroloquinoline quinone pocket. Cysteine 408 and cysteine 437 are disulfide-bonded. Pyrroloquinoline quinone-binding residues include tryptophan 494 and tryptophan 558.

It belongs to the bacterial PQQ dehydrogenase family. Homodimer. The cofactor is La(3+). Nd(3+) serves as cofactor. Pyrroloquinoline quinone is required as a cofactor.

The protein localises to the periplasm. It catalyses the reaction 2 Fe(III)-[cytochrome cL] + methanol = 2 Fe(II)-[cytochrome cL] + formaldehyde + 2 H(+). Its function is as follows. Catalyzes the oxidation of methanol to formaldehyde, but only in the presence of lanthanides (Ln). Contributes to methanol metabolism when La(3+) is present in the natural environment of the bacterium, allowing bacterial growth with methanol as carbon and energy source. Thereby is an essential enzyme for Ln-dependent methylotrophy. Uses a specific cytochrome cL (XoxG), encoded by the adjacent gene in the locus, as electron acceptor. Also plays a role in the transcriptional regulation of the mxa and xox1 operons, most likely acting as a lanthanide sensory module. Is also able to oxidize formaldehyde to formate in vitro, but this activity does not occur in vivo. In Methylorubrum extorquens (strain ATCC 14718 / DSM 1338 / JCM 2805 / NCIMB 9133 / AM1) (Methylobacterium extorquens), this protein is Lanthanide-dependent methanol dehydrogenase.